We begin with the raw amino-acid sequence, 151 residues long: 3-hydroxyacyl-[acyl-carrier-protein] dehydratase FabZ (151 aa).

H54 is an active-site residue.

Belongs to the thioester dehydratase family. FabZ subfamily.

Its subcellular location is the cytoplasm. The enzyme catalyses a (3R)-hydroxyacyl-[ACP] = a (2E)-enoyl-[ACP] + H2O. Its function is as follows. Involved in unsaturated fatty acids biosynthesis. Catalyzes the dehydration of short chain beta-hydroxyacyl-ACPs and long chain saturated and unsaturated beta-hydroxyacyl-ACPs. The chain is 3-hydroxyacyl-[acyl-carrier-protein] dehydratase FabZ from Cronobacter sakazakii (strain ATCC BAA-894) (Enterobacter sakazakii).